A 57-amino-acid chain; its full sequence is Granulin-1 (57 aa).

2 disulfides stabilise this stretch: Cys-4/Cys-16 and Cys-10/Cys-26.

It belongs to the granulin family. In terms of processing, granulins are disulfide bridged. Ubiquitous.

It localises to the secreted. Granulins have possible cytokine-like activity. They may play a role in inflammation, wound repair, and tissue remodeling. The chain is Granulin-1 from Cyprinus carpio (Common carp).